A 186-amino-acid chain; its full sequence is MDDYTQSINDAVKCLRQGGVIAYPTEAVYGLGCDPFNHDAVAQLLTIKKRSIKKGFILIASEWKQVEPLTEPIDPKALARVFDTWPGPFTWTFPASKEAPHWITGQHSTIAIRVTAHPLAKLLCQRFAGPLISSSANQEGEPPIRDVKILRLVFGNKIDKTLEGPLGPTHRPTPIRDAITGEILRL.

Positions 5 to 186 (TQSINDAVKC…DAITGEILRL (182 aa)) constitute a YrdC-like domain.

Belongs to the SUA5 family. TsaC subfamily.

The protein localises to the cytoplasm. It catalyses the reaction L-threonine + hydrogencarbonate + ATP = L-threonylcarbamoyladenylate + diphosphate + H2O. Functionally, required for the formation of a threonylcarbamoyl group on adenosine at position 37 (t(6)A37) in tRNAs that read codons beginning with adenine. Catalyzes the conversion of L-threonine, HCO(3)(-)/CO(2) and ATP to give threonylcarbamoyl-AMP (TC-AMP) as the acyladenylate intermediate, with the release of diphosphate. This chain is Threonylcarbamoyl-AMP synthase, found in Coxiella burnetii (strain RSA 331 / Henzerling II).